Here is a 159-residue protein sequence, read N- to C-terminus: Ribosomal RNA large subunit methyltransferase H (159 aa).

S-adenosyl-L-methionine is bound by residues Leu76, Gly108, and 127-132 (FGQLTL).

The protein belongs to the RNA methyltransferase RlmH family. In terms of assembly, homodimer.

The protein resides in the cytoplasm. It carries out the reaction pseudouridine(1915) in 23S rRNA + S-adenosyl-L-methionine = N(3)-methylpseudouridine(1915) in 23S rRNA + S-adenosyl-L-homocysteine + H(+). Its function is as follows. Specifically methylates the pseudouridine at position 1915 (m3Psi1915) in 23S rRNA. This Streptococcus suis (strain 05ZYH33) protein is Ribosomal RNA large subunit methyltransferase H.